We begin with the raw amino-acid sequence, 206 residues long: Synaptosomal-associated protein 25 (206 aa).

Basic and acidic residues predominate over residues 1–20; the sequence is MAEDADMRNELEEMQRRADQ. The disordered stretch occupies residues 1-25; sequence MAEDADMRNELEEMQRRADQLADES. The interaction with CENPF stretch occupies residues 1-75; it reads MAEDADMRNE…QINKDMKEAE (75 aa). Residues 19–81 enclose the t-SNARE coiled-coil homology 1 domain; sequence DQLADESLES…KEAEKNSTDL (63 aa). 4 S-palmitoyl cysteine lipidation sites follow: C85, C88, C90, and C92. Residues 111–120 are interaction with ZDHHC17; it reads GVVASQPARV. T138 is subject to Phosphothreonine. The t-SNARE coiled-coil homology 2 domain maps to 140-202; sequence DARENEMDEN…DEANQRATKM (63 aa). S154 and S187 each carry phosphoserine.

It belongs to the SNAP-25 family. In terms of assembly, part of the SNARE core complex containing SNAP25, VAMP2 and STX1A; this complex binds CPLX1. Found in a complex containing SYT1, SV2B and syntaxin-1. Found in a ternary complex with STX1A and VAMP8. Interacts with HSC70 and with SYT9, forming a complex with DNAJC5. The interaction with SYT9 is inhibited in presence of calcium. Isoform 1 and isoform 2 interact with BLOC1S6. Interacts with CENPF. Interacts with EQTN. Interacts with HGS. Interacts with KCNB1 (via N-terminus); reduces the voltage-dependent potassium channel KCNB1 activity in pancreatic beta cells. Interacts with OTOF. Interacts with RIMS1. Interacts with SNAPIN. Interacts with STXBP6. Interacts with TRIM9. Interacts with ZDHHC13 (via ANK repeats). Interacts with ZDHHC17 (via ANK repeats). Associates with the BLOC-1 complex. Interacts with PLCL1 (via C2 domain). Interacts with PRRT2; this interaction may impair the formation of the SNARE complex. Interacts with alpha-synuclein/SNCA. Interacts with PRPH2. Interacts with ROM1. Interacts with STX3. Palmitoylated. Cys-85 appears to be the main site, and palmitoylation is required for membrane association.

The protein resides in the cytoplasm. Its subcellular location is the perinuclear region. It localises to the cell membrane. It is found in the synapse. The protein localises to the synaptosome. The protein resides in the photoreceptor inner segment. Functionally, t-SNARE involved in the molecular regulation of neurotransmitter release. May play an important role in the synaptic function of specific neuronal systems. Associates with proteins involved in vesicle docking and membrane fusion. Regulates plasma membrane recycling through its interaction with CENPF. Modulates the gating characteristics of the delayed rectifier voltage-dependent potassium channel KCNB1 in pancreatic beta cells. The polypeptide is Synaptosomal-associated protein 25 (SNAP25) (Pongo abelii (Sumatran orangutan)).